The following is a 543-amino-acid chain: UBP9-binding protein bun62 (543 aa).

Residue Ser-43 is modified to Phosphoserine. WD repeat units follow at residues 239–279, 320–361, 362–401, 404–448, and 513–542; these read LNSS…QPLH, FSKS…DVFH, SYFAGLTCVTWSPDGKFIAIGGKDDLVSIYSFPLRKLVAR, GHKS…IHRP, and VDDSPLSSVFFDPDCMITCATNGRIRTWQR.

Interacts with ubp9 and bun107.

It localises to the nucleus. The protein localises to the cytoplasm. Its subcellular location is the cell tip. Its function is as follows. Required for the ubp9 recruitment to septa and cell tips but also for its enzymatic activity at these specific locations. The sequence is that of UBP9-binding protein bun62 (bun62) from Schizosaccharomyces pombe (strain 972 / ATCC 24843) (Fission yeast).